Here is a 174-residue protein sequence, read N- to C-terminus: Crossover junction endodeoxyribonuclease RuvC (174 aa).

Residues Asp8, Glu68, and Asp140 contribute to the active site. 3 residues coordinate Mg(2+): Asp8, Glu68, and Asp140.

It belongs to the RuvC family. As to quaternary structure, homodimer which binds Holliday junction (HJ) DNA. The HJ becomes 2-fold symmetrical on binding to RuvC with unstacked arms; it has a different conformation from HJ DNA in complex with RuvA. In the full resolvosome a probable DNA-RuvA(4)-RuvB(12)-RuvC(2) complex forms which resolves the HJ. Mg(2+) is required as a cofactor.

The protein resides in the cytoplasm. It catalyses the reaction Endonucleolytic cleavage at a junction such as a reciprocal single-stranded crossover between two homologous DNA duplexes (Holliday junction).. Functionally, the RuvA-RuvB-RuvC complex processes Holliday junction (HJ) DNA during genetic recombination and DNA repair. Endonuclease that resolves HJ intermediates. Cleaves cruciform DNA by making single-stranded nicks across the HJ at symmetrical positions within the homologous arms, yielding a 5'-phosphate and a 3'-hydroxyl group; requires a central core of homology in the junction. The consensus cleavage sequence is 5'-(A/T)TT(C/G)-3'. Cleavage occurs on the 3'-side of the TT dinucleotide at the point of strand exchange. HJ branch migration catalyzed by RuvA-RuvB allows RuvC to scan DNA until it finds its consensus sequence, where it cleaves and resolves the cruciform DNA. The chain is Crossover junction endodeoxyribonuclease RuvC from Legionella pneumophila (strain Corby).